The following is a 491-amino-acid chain: Probable cytosol aminopeptidase (491 aa).

Mn(2+)-binding residues include lysine 261 and aspartate 266. Lysine 273 is a catalytic residue. Residues aspartate 285, aspartate 344, and glutamate 346 each contribute to the Mn(2+) site. Arginine 348 is an active-site residue.

Belongs to the peptidase M17 family. It depends on Mn(2+) as a cofactor.

It localises to the cytoplasm. The enzyme catalyses Release of an N-terminal amino acid, Xaa-|-Yaa-, in which Xaa is preferably Leu, but may be other amino acids including Pro although not Arg or Lys, and Yaa may be Pro. Amino acid amides and methyl esters are also readily hydrolyzed, but rates on arylamides are exceedingly low.. It catalyses the reaction Release of an N-terminal amino acid, preferentially leucine, but not glutamic or aspartic acids.. Presumably involved in the processing and regular turnover of intracellular proteins. Catalyzes the removal of unsubstituted N-terminal amino acids from various peptides. The sequence is that of Probable cytosol aminopeptidase from Picosynechococcus sp. (strain ATCC 27264 / PCC 7002 / PR-6) (Agmenellum quadruplicatum).